A 51-amino-acid polypeptide reads, in one-letter code: Large ribosomal subunit protein bL33 (51 aa).

This sequence belongs to the bacterial ribosomal protein bL33 family.

This is Large ribosomal subunit protein bL33 from Marinobacter nauticus (strain ATCC 700491 / DSM 11845 / VT8) (Marinobacter aquaeolei).